Here is a 426-residue protein sequence, read N- to C-terminus: MDLTGGFGARSGGVGPCREPIGLESLHLGDEFRQLVTTLPPENPGGSFTALLELPPTQAVELLHFTDSSSSQQAAVTGIGGEIPPPLHSFGGTLAFPSNSVLMERAARFSVIATEQQNGNISGETPTSSVPSNSSANLDRVKTEPAETDSSQRLISDSAIENQIPCPNQNNRNGKRKDFEKKGKSSTKKNKSSEENEKLPYVHVRARRGQATDSHSLAERARREKINARMKLLQELVPGCDKGTDFGGKIKIKVCFGVHLLMISGKKVAIFLWKVSCEDLIDCSFSPPRIQGTALVLDEIINHVQSLQRQVEMLSMRLAAVNPRIDFNLDTILASENGSLMDGSFNAAPMQLAWPQQAIETEQSFHHRQLQQPPTQQWPFDGLNQPVWGREEDQAHGNDNSNLMAVSENVMVASANLHPNQVKMEL.

Polar residues-rich tracts occupy residues glutamine 117–asparagine 137 and threonine 148–arginine 172. The interval glutamine 117–tyrosine 201 is disordered. Residues lysine 191 to proline 200 show a composition bias toward basic and acidic residues. Residues glutamine 210 to leucine 307 form the bHLH domain. The segment at histidine 367–asparagine 398 is disordered.

Homodimer. As to expression, expressed constitutively in roots, leaves, stems, and flowers.

It localises to the nucleus. In Arabidopsis thaliana (Mouse-ear cress), this protein is Transcription factor bHLH60 (BHLH60).